A 157-amino-acid chain; its full sequence is 3-hydroxyacyl-[acyl-carrier-protein] dehydratase FabZ (157 aa).

Histidine 58 is an active-site residue.

The protein belongs to the thioester dehydratase family. FabZ subfamily.

It is found in the cytoplasm. It carries out the reaction a (3R)-hydroxyacyl-[ACP] = a (2E)-enoyl-[ACP] + H2O. Functionally, involved in unsaturated fatty acids biosynthesis. Catalyzes the dehydration of short chain beta-hydroxyacyl-ACPs and long chain saturated and unsaturated beta-hydroxyacyl-ACPs. The protein is 3-hydroxyacyl-[acyl-carrier-protein] dehydratase FabZ of Rhizobium rhizogenes (strain K84 / ATCC BAA-868) (Agrobacterium radiobacter).